Consider the following 471-residue polypeptide: POU domain protein 2 (471 aa).

The segment covering 1 to 18 has biased composition (acidic residues); sequence CGKSYEEEEEEEDDELEA. 2 disordered regions span residues 1-32 and 149-238; these read CGKS…SARQ and DQQL…PKPL. A compositionally biased stretch (low complexity) spans 165–180; sequence STPLSKSPLRSPSLSP. The span at 186–196 shows a compositional bias: polar residues; the sequence is EPQQAQRTPPN. The segment covering 197–230 has biased composition (low complexity); that stretch reads SLAAAGLGLSSAVLTPNTPSMQQQQQQTMTSTTN. The POU-specific domain occupies 257–331; it reads EETTDLEELE…LLQKWLEDAD (75 aa). Residues 362-421 constitute a DNA-binding region (homeobox); that stretch reads RRKKRTSIETTIRGALEQAFVLNCKPTSEEINQLSERLHMDKEVVRVWFCNRRQKEKRIN.

Belongs to the POU transcription factor family. Class-2 subfamily.

The protein resides in the nucleus. In terms of biological role, DNA-binding regulatory protein implicated in early development. Involved in neuronal cell fate decision. May act as an octamer-dependent activator of transcription. This chain is POU domain protein 2 (pdm2), found in Drosophila virilis (Fruit fly).